The chain runs to 705 residues: Elongation factor G (705 aa).

The tr-type G domain maps to 8–294; it reads NLYRNFGIMA…AVIDYLPSPL (287 aa). GTP-binding positions include 17–24, 92–96, and 146–149; these read AHIDAGKT, DTPGH, and NKMD.

This sequence belongs to the TRAFAC class translation factor GTPase superfamily. Classic translation factor GTPase family. EF-G/EF-2 subfamily.

The protein resides in the cytoplasm. Its function is as follows. Catalyzes the GTP-dependent ribosomal translocation step during translation elongation. During this step, the ribosome changes from the pre-translocational (PRE) to the post-translocational (POST) state as the newly formed A-site-bound peptidyl-tRNA and P-site-bound deacylated tRNA move to the P and E sites, respectively. Catalyzes the coordinated movement of the two tRNA molecules, the mRNA and conformational changes in the ribosome. This chain is Elongation factor G, found in Ruegeria pomeroyi (strain ATCC 700808 / DSM 15171 / DSS-3) (Silicibacter pomeroyi).